The following is a 424-amino-acid chain: Histidine--tRNA ligase (424 aa).

It belongs to the class-II aminoacyl-tRNA synthetase family. As to quaternary structure, homodimer.

It is found in the cytoplasm. The catalysed reaction is tRNA(His) + L-histidine + ATP = L-histidyl-tRNA(His) + AMP + diphosphate + H(+). This Shigella boydii serotype 18 (strain CDC 3083-94 / BS512) protein is Histidine--tRNA ligase.